The primary structure comprises 187 residues: Large ribosomal subunit protein uL6 (187 aa).

The protein belongs to the universal ribosomal protein uL6 family. Part of the 50S ribosomal subunit.

This protein binds to the 23S rRNA, and is important in its secondary structure. It is located near the subunit interface in the base of the L7/L12 stalk, and near the tRNA binding site of the peptidyltransferase center. The polypeptide is Large ribosomal subunit protein uL6 (Roseiflexus castenholzii (strain DSM 13941 / HLO8)).